A 391-amino-acid chain; its full sequence is MAKEKFERSKPHVNIGTIGHVDHGKTTLTAAITKYFGDFKAYDQIDGAPEEKARGITISTAHVEYETDSRHYAHVDCPGHADYVKNMITGAAQMDGAILVVNAADGPMPQTREHILLGRQVGIPFMVVYMNKVDQVDDEELLELVEMEIRELLSSYDYPGDDIPIIRGSALHAMNGTEPSMGEESIRALMAAVDEYIPTPARAVDQPFLMPIEDVFSISGRGTVVTGRVERGVINVGDSIEIVGIRDTKTTTCTGVEMFRKLLDRGEAGDNIGALLRGIDREGVERGQVLCKPGSVTPHTKFEAEAYILTKEEGGRHTPFFANYRPQFYFRTTDVTGTVTLAEGTEMVMPGDNVGFTVELIAPIAMEDGLRFAIREGGRTVGAGVVSKIIE.

The region spanning 10–201 (KPHVNIGTIG…AVDEYIPTPA (192 aa)) is the tr-type G domain. A G1 region spans residues 19–26 (GHVDHGKT). 19-26 (GHVDHGKT) contacts GTP. Residue threonine 26 participates in Mg(2+) binding. The segment at 55–59 (GITIS) is G2. Residues 76 to 79 (DCPG) are G3. GTP contacts are provided by residues 76-80 (DCPGH) and 131-134 (NKVD). Positions 131–134 (NKVD) are G4. Residues 169–171 (SAL) form a G5 region.

Belongs to the TRAFAC class translation factor GTPase superfamily. Classic translation factor GTPase family. EF-Tu/EF-1A subfamily. In terms of assembly, monomer.

Its subcellular location is the cytoplasm. The catalysed reaction is GTP + H2O = GDP + phosphate + H(+). Functionally, GTP hydrolase that promotes the GTP-dependent binding of aminoacyl-tRNA to the A-site of ribosomes during protein biosynthesis. The protein is Elongation factor Tu of Ruegeria pomeroyi (strain ATCC 700808 / DSM 15171 / DSS-3) (Silicibacter pomeroyi).